Consider the following 423-residue polypeptide: Phosphoribosylamine--glycine ligase (423 aa).

The ATP-grasp domain occupies 107–312 (KAFADRYGLP…LVPYLVACAN (206 aa)). Position 133–193 (133–193 (LELFEPPYVI…EEFLEGEIGS (61 aa))) interacts with ATP. Residues Glu-270, Glu-282, and Asn-284 each contribute to the Mg(2+) site. The Mn(2+) site is built by Glu-270, Glu-282, and Asn-284.

Belongs to the GARS family. Mg(2+) serves as cofactor. The cofactor is Mn(2+).

The catalysed reaction is 5-phospho-beta-D-ribosylamine + glycine + ATP = N(1)-(5-phospho-beta-D-ribosyl)glycinamide + ADP + phosphate + H(+). It participates in purine metabolism; IMP biosynthesis via de novo pathway; N(1)-(5-phospho-D-ribosyl)glycinamide from 5-phospho-alpha-D-ribose 1-diphosphate: step 2/2. This chain is Phosphoribosylamine--glycine ligase, found in Phenylobacterium zucineum (strain HLK1).